We begin with the raw amino-acid sequence, 629 residues long: 1-deoxy-D-xylulose-5-phosphate synthase (629 aa).

Thiamine diphosphate contacts are provided by residues H73 and 114–116; that span reads GHA. Mg(2+) is bound at residue D145. Residues 146–147, N174, Y284, and E360 each bind thiamine diphosphate; that span reads GA. N174 serves as a coordination point for Mg(2+).

It belongs to the transketolase family. DXPS subfamily. As to quaternary structure, homodimer. Mg(2+) is required as a cofactor. Thiamine diphosphate serves as cofactor.

It carries out the reaction D-glyceraldehyde 3-phosphate + pyruvate + H(+) = 1-deoxy-D-xylulose 5-phosphate + CO2. Its pathway is metabolic intermediate biosynthesis; 1-deoxy-D-xylulose 5-phosphate biosynthesis; 1-deoxy-D-xylulose 5-phosphate from D-glyceraldehyde 3-phosphate and pyruvate: step 1/1. Its function is as follows. Catalyzes the acyloin condensation reaction between C atoms 2 and 3 of pyruvate and glyceraldehyde 3-phosphate to yield 1-deoxy-D-xylulose-5-phosphate (DXP). The protein is 1-deoxy-D-xylulose-5-phosphate synthase of Thermomicrobium roseum (strain ATCC 27502 / DSM 5159 / P-2).